The sequence spans 260 residues: Spectinomycin 9-adenylyltransferase (260 aa).

It catalyses the reaction spectinomycin + ATP = 9-O-adenylylspectinomycin + diphosphate. Functionally, mediates bacterial resistance to the antibiotic spectinomycin but not streptomycin. The chain is Spectinomycin 9-adenylyltransferase (ant1) from Staphylococcus aureus (strain Mu50 / ATCC 700699).